We begin with the raw amino-acid sequence, 427 residues long: MSRSETLFSNAQKHIPGGVNSPVRAFKSVGGTPLFFKHAEGAYVLDEDDKRYVDYVGSWGPMILGHSHPDVLDAVRRQLDHGLSYGAPTALEVEMADLVCAMVPSMEMVRMVSSGTEATMSAIRLARGYTGRDSIIKFEGCYHGHSDSLLVKAGSGALTFGVPNSPGVPAAFAKHTLTLPFNDIEAVRETLAEVGTDVACIIVEPVAGNMNCVPPAPGFLEGLREACDEHGVVLIFDEVMTGFRVALGGAQAYYGVTPDLSTFGKIIGGGMPVGAFGGKREIMQQISPLGPVYQAGTLSGNPLAMAAGLTTLRLISRPGFHDELGAYTTRMLEGLQQRADAAGIPFVTTQAGGMFGLYFTDAEAIVTFEDVMTSDVERFKRFFHLMLDGGVYLAPSAFEAGFTSIAHGDRELEITLNAAEKAFAALK.

The residue at position 265 (K265) is an N6-(pyridoxal phosphate)lysine.

Belongs to the class-III pyridoxal-phosphate-dependent aminotransferase family. HemL subfamily. Homodimer. It depends on pyridoxal 5'-phosphate as a cofactor.

The protein localises to the cytoplasm. The enzyme catalyses (S)-4-amino-5-oxopentanoate = 5-aminolevulinate. It participates in porphyrin-containing compound metabolism; protoporphyrin-IX biosynthesis; 5-aminolevulinate from L-glutamyl-tRNA(Glu): step 2/2. The protein is Glutamate-1-semialdehyde 2,1-aminomutase of Pseudomonas paraeruginosa (strain DSM 24068 / PA7) (Pseudomonas aeruginosa (strain PA7)).